A 68-amino-acid chain; its full sequence is Large ribosomal subunit protein uL29 (68 aa).

Belongs to the universal ribosomal protein uL29 family.

This Streptococcus suis (strain 98HAH33) protein is Large ribosomal subunit protein uL29.